Consider the following 689-residue polypeptide: Beta-galactosidase Pbg (689 aa).

R118 lines the substrate pocket. Position 122 (C122) interacts with Zn(2+). Residue N156 participates in substrate binding. Residue E157 is the Proton donor of the active site. Zn(2+) is bound by residues C162, C164, and C167. E318 acts as the Nucleophile in catalysis. Substrate contacts are provided by residues W326 and 366-369 (EKFH).

It belongs to the glycosyl hydrolase 42 family.

The enzyme catalyses Hydrolysis of terminal non-reducing beta-D-galactose residues in beta-D-galactosides.. This is Beta-galactosidase Pbg from Clostridium perfringens (strain ATCC 13124 / DSM 756 / JCM 1290 / NCIMB 6125 / NCTC 8237 / Type A).